A 279-amino-acid polypeptide reads, in one-letter code: Sarcosine/dimethylglycine N-methyltransferase (279 aa).

It belongs to the methyltransferase superfamily. Monomer.

The enzyme catalyses sarcosine + 2 S-adenosyl-L-methionine = glycine betaine + 2 S-adenosyl-L-homocysteine + 2 H(+). It carries out the reaction sarcosine + S-adenosyl-L-methionine = N,N-dimethylglycine + S-adenosyl-L-homocysteine + H(+). It catalyses the reaction N,N-dimethylglycine + S-adenosyl-L-methionine = glycine betaine + S-adenosyl-L-homocysteine + H(+). The protein operates within amine and polyamine biosynthesis; betaine biosynthesis via glycine pathway; betaine from glycine: step 2/3. Its pathway is amine and polyamine biosynthesis; betaine biosynthesis via glycine pathway; betaine from glycine: step 3/3. With respect to regulation, p-chloromercuribenzoate acid inhibits 23% of the SDMT activities on sarcosine and dimethylglycine, and S-adenosylhomocysteine (AdoHcy) inhibits completely GSMT activities. Its function is as follows. Catalyzes the methylation of sarcosine and dimethylglycine to dimethylglycine and betaine, respectively, with S-adenosylmethionine (AdoMet) acting as the methyl donor. It has strict specificity for sarcosine and dimethylglycine as the methyl group acceptors. The sequence is that of Sarcosine/dimethylglycine N-methyltransferase from Halorhodospira halochloris (Ectothiorhodospira halochloris).